Reading from the N-terminus, the 295-residue chain is Glycine--tRNA ligase alpha subunit (295 aa).

This sequence belongs to the class-II aminoacyl-tRNA synthetase family. Tetramer of two alpha and two beta subunits.

Its subcellular location is the cytoplasm. It catalyses the reaction tRNA(Gly) + glycine + ATP = glycyl-tRNA(Gly) + AMP + diphosphate. This is Glycine--tRNA ligase alpha subunit from Rhodospirillum rubrum (strain ATCC 11170 / ATH 1.1.1 / DSM 467 / LMG 4362 / NCIMB 8255 / S1).